We begin with the raw amino-acid sequence, 163 residues long: Transcriptional repressor NrdR (163 aa).

The interval 1-22 is disordered; sequence MRCPKCQSLKSSVIDSRQAEDG. The segment at 3–34 is a zinc-finger region; that stretch reads CPKCQSLKSSVIDSRQAEDGNTIRRRRSCDQC. Residues 49 to 139 form the ATP-cone domain; sequence LVVVKKDGTR…VYRSFKDVGE (91 aa).

The protein belongs to the NrdR family. Requires Zn(2+) as cofactor.

Negatively regulates transcription of bacterial ribonucleotide reductase nrd genes and operons by binding to NrdR-boxes. The protein is Transcriptional repressor NrdR of Streptococcus suis (strain 98HAH33).